The chain runs to 358 residues: Peptide chain release factor 1 (358 aa).

Glutamine 233 carries the N5-methylglutamine modification.

Belongs to the prokaryotic/mitochondrial release factor family. In terms of processing, methylated by PrmC. Methylation increases the termination efficiency of RF1.

It localises to the cytoplasm. Its function is as follows. Peptide chain release factor 1 directs the termination of translation in response to the peptide chain termination codons UAG and UAA. This Macrococcus caseolyticus (strain JCSC5402) (Macrococcoides caseolyticum) protein is Peptide chain release factor 1.